The chain runs to 256 residues: Small ribosomal subunit protein eS1 (256 aa).

A2 carries the post-translational modification N-acetylalanine; partial.

This sequence belongs to the eukaryotic ribosomal protein eS1 family. Component of the small ribosomal subunit. Mature ribosomes consist of a small (40S) and a large (60S) subunit. The 40S subunit contains about 33 different proteins and 1 molecule of RNA (18S). The 60S subunit contains about 49 different proteins and 3 molecules of RNA (25S, 5.8S and 5S).

The protein localises to the cytoplasm. The chain is Small ribosomal subunit protein eS1 from Eremothecium gossypii (strain ATCC 10895 / CBS 109.51 / FGSC 9923 / NRRL Y-1056) (Yeast).